The sequence spans 79 residues: Small ribosomal subunit protein bS18 (79 aa).

The protein belongs to the bacterial ribosomal protein bS18 family. In terms of assembly, part of the 30S ribosomal subunit. Forms a tight heterodimer with protein bS6.

In terms of biological role, binds as a heterodimer with protein bS6 to the central domain of the 16S rRNA, where it helps stabilize the platform of the 30S subunit. The polypeptide is Small ribosomal subunit protein bS18 (rpsR) (Bacillus subtilis (strain 168)).